Consider the following 285-residue polypeptide: Purine biosynthesis transcriptional repressor PurR (285 aa).

A DNA binding domain region spans residues 1–73; it reads MKFRRSGRLV…GAAGGVKYIP (73 aa). An effector binding domain region spans residues 74-285; sequence KMKQAEAEEF…NLLKNGETES (212 aa). Tyrosine 102 contacts guanosine 3',5'-bis(diphosphate). Alanine 138, threonine 139, lysine 140, and arginine 160 together coordinate 5-phospho-alpha-D-ribose 1-diphosphate. 2 residues coordinate guanosine 3',5'-bis(diphosphate): glycine 178 and serine 179. 5-phospho-alpha-D-ribose 1-diphosphate contacts are provided by aspartate 203, aspartate 204, phenylalanine 205, lysine 207, and alanine 208. Lysine 207 provides a ligand contact to guanosine 3',5'-bis(diphosphate). Guanosine 3',5'-bis(diphosphate) is bound by residues glycine 209, glycine 210, and threonine 211. A 5-phospho-alpha-D-ribose 1-diphosphate-binding site is contributed by threonine 211.

This sequence belongs to the purine/pyrimidine phosphoribosyltransferase family. PurR subfamily. Homodimer.

Its activity is regulated as follows. The binding of PurR to DNA, and therefore the repressor activity, is influenced by interaction with the effector molecules 5-phosphoribosyl 1-pyrophosphate (PRPP) and (p)ppGpp. PRPP binds to PurR and reduces affinity of PurR for DNA, which inhibits the repressor activity and induces transcription of the target genes. On the contrary, (p)ppGpp enhances binding of PurR to DNA and repression of the transcription. PRPP and (p)ppGpp compete for PurR binding and allosteric control of transcription. ppGpp maintains PurR-DNA interaction and prevents PRPP from de-repressing PurR regulation during conditions that lead to (p)ppGpp induction, such as upon amino acid starvation. In terms of biological role, DNA-binding transcriptional repressor that controls the expression of a number of genes involved in the synthesis, metabolism and transport of purines. In response to a signal of excess adenine, represses the transcription of the pur operon, which encodes enzymes of the purine biosynthetic pathway. It also represses the expression of the purA and purR genes. In addition, controls the expression of several other genes or operons, which encode enzymes or transporters playing a role in purine nucleotide metabolism. Acts by binding directly to specific DNA sequences, named PurBoxes, in the upstream control regions of affected genes. Two PurBoxes are required for high-affinity PurR binding. Also responds to amino acid starvation via (p)ppGpp, which strongly increases PurR activity and repression of purine nucleotide biosynthesis genes. This chain is Purine biosynthesis transcriptional repressor PurR, found in Bacillus subtilis (strain 168).